Consider the following 223-residue polypeptide: Putative PAN domain-containing protein R486 (223 aa).

The first 23 residues, 1–23, serve as a signal peptide directing secretion; sequence MSQTAIIIWIVVIIILLVLGGLG. Positions 39 to 73 are disordered; the sequence is PTPINPPSSITPIQPINPPSSITPIQPSGPPSGGN. The span at 45–64 shows a compositional bias: low complexity; that stretch reads PSSITPIQPINPPSSITPIQ. PAN domains are found at residues 80–155 and 159–223; these read CPAY…EDGC and ARYN…KMPH. Cystine bridges form between C80-C155 and C109-C131. Residues N162, N189, and N213 are each glycosylated (N-linked (GlcNAc...) asparagine; by host). C182 and C204 form a disulfide bridge.

It localises to the secreted. Its subcellular location is the virion. The chain is Putative PAN domain-containing protein R486 from Acanthamoeba polyphaga mimivirus (APMV).